Reading from the N-terminus, the 242-residue chain is tRNA (guanine-N(1)-)-methyltransferase (242 aa).

Residues Gly-114 and 134-139 contribute to the S-adenosyl-L-methionine site; that span reads IGDFVL. Residues 223–233 show a composition bias toward basic and acidic residues; the sequence is RRDLLPEHSKN. Positions 223-242 are disordered; the sequence is RRDLLPEHSKNNPEQTNKLS.

Belongs to the RNA methyltransferase TrmD family. As to quaternary structure, homodimer.

The protein localises to the cytoplasm. The enzyme catalyses guanosine(37) in tRNA + S-adenosyl-L-methionine = N(1)-methylguanosine(37) in tRNA + S-adenosyl-L-homocysteine + H(+). Functionally, specifically methylates guanosine-37 in various tRNAs. This Rhodopirellula baltica (strain DSM 10527 / NCIMB 13988 / SH1) protein is tRNA (guanine-N(1)-)-methyltransferase.